We begin with the raw amino-acid sequence, 405 residues long: uncharacterized protein (405 aa).

Residues 1–34 (MNKFLKYFLILLALVLIVVPIVFATLLFKTSQDA) form the signal peptide. Basic and acidic residues predominate over residues 348-359 (EQNDTTDKDKTS). Residues 348–405 (EQNDTTDKDKTSNENSDSTNNSDSSNQQQPATDQNSNQNQGGTQQAPQASNNQNGVVN) form a disordered region. Composition is skewed to low complexity over residues 360–373 (NENS…DSSN) and 381–392 (QNSNQNQGGTQQ). Positions 393 to 405 (APQASNNQNGVVN) are enriched in polar residues.

This sequence belongs to the LytR/CpsA/Psr (LCP) family.

This is an uncharacterized protein from Staphylococcus aureus (strain NCTC 8325 / PS 47).